The chain runs to 171 residues: Protein FAM209A (171 aa).

Positions 1–19 are cleaved as a signal peptide; the sequence is MWTLKSSLVLLLCLTCSYA. Over 20-52 the chain is Extracellular; that stretch reads FMFSSLRQKTSEPQGKVQYGEHFRIRQNLPEHT. The chain crosses the membrane as a helical span at residues 53-73; sequence QGWLGSKWLWLLFVVVPFVIL. Residues 74–171 lie on the Cytoplasmic side of the membrane; sequence QCQRDSEKNK…CEIWGEESSS (98 aa). Positions 81 to 107 are disordered; sequence KNKEQSPPGLRGGQLHSPLKKKRNASP. A coiled-coil region spans residues 114-139; sequence NTLMELEVELMKFVSKVRNLKRAMAT.

This sequence belongs to the FAM209 family. In terms of assembly, interacts with DPY19L2. Interacts with CYLC1; the interaction may be relevant for proper acrosome attachment to the nuclear envelope.

It is found in the nucleus inner membrane. Functionally, may play a role in sperm acrosome biogenesis. The chain is Protein FAM209A from Homo sapiens (Human).